The sequence spans 766 residues: FYVE, RhoGEF and PH domain-containing protein 4 (766 aa).

Disordered stretches follow at residues 1–20 (MEEI…PSKV), 46–83 (NLNA…DKTQ), and 134–188 (ETAT…ESPL). An actin filament-binding region spans residues 1–150 (MEEIKPASAS…SPTTDSCDGN (150 aa)). Composition is skewed to polar residues over residues 58 to 83 (LTTT…DKTQ) and 145 to 157 (DSCD…SSYR). Residues 167 to 184 (LEERGAETETKVQERENG) are compositionally biased toward basic and acidic residues. The 188-residue stretch at 206 to 393 (KLHKIANELL…STAASHSNSA (188 aa)) folds into the DH domain. Positions 422–521 (ELIKEGQILK…WIKALQETID (100 aa)) constitute a PH 1 domain. The FYVE-type zinc-finger motif lies at 559-619 (DNEVTMCMKC…VCKDCYQIIS (61 aa)). Positions 565, 568, 582, 585, 590, 593, 611, and 614 each coordinate Zn(2+). The PH 2 domain occupies 643–740 (NSVVCSFLQY…WLKVILLAVT (98 aa)). Serine 702 and serine 716 each carry phosphoserine. The disordered stretch occupies residues 742–766 (ETPGGPNEHPATLDDHPEPKKKSEC). Residues 752-766 (ATLDDHPEPKKKSEC) are compositionally biased toward basic and acidic residues.

Homooligomer. In terms of tissue distribution, expressed in different tissues, including brain, cerebellum, peripheral nerve, skeletal muscle, heart, uterus, placenta and testis.

It is found in the cytoplasm. Its subcellular location is the cytoskeleton. The protein localises to the cell projection. It localises to the filopodium. Its function is as follows. Activates CDC42, a member of the Ras-like family of Rho- and Rac proteins, by exchanging bound GDP for free GTP. Plays a role in regulating the actin cytoskeleton and cell shape. Activates MAPK8. The protein is FYVE, RhoGEF and PH domain-containing protein 4 (FGD4) of Homo sapiens (Human).